The primary structure comprises 378 residues: Alpha-galactosidase (378 aa).

The first 15 residues, 1-15 (MVKSPGTEDYTRRSL), serve as a signal peptide directing secretion. 2 cysteine pairs are disulfide-bonded: Cys-36-Cys-68 and Cys-116-Cys-147. Catalysis depends on Asp-145, which acts as the Nucleophile. 178 to 182 (EWGEE) serves as a coordination point for substrate. The active-site Proton donor is Asp-200.

Belongs to the glycosyl hydrolase 27 family.

It catalyses the reaction Hydrolysis of terminal, non-reducing alpha-D-galactose residues in alpha-D-galactosides, including galactose oligosaccharides, galactomannans and galactolipids.. Preferentially cleaves alpha-1,3 and alpha-1,4 glycoside linkages. Involved in the hydrolysis of the galactomannan, it splits alpha-linked galactose moieties. It is particularly suitable for the hydrolysis of guar gum to a gum with improved gelling properties. Can cleave terminal alpha-1,3-linked galactose residues responsible for blood group B specificity from the surface of erythrocytes thereby converting these cells serologically to group O. In Coffea arabica (Arabian coffee), this protein is Alpha-galactosidase.